A 340-amino-acid chain; its full sequence is GTP 3',8-cyclase (340 aa).

Residues 20–246 (RFERQYVYLR…PKALSDGPAK (227 aa)) enclose the Radical SAM core domain. R29 contributes to the GTP binding site. The [4Fe-4S] cluster site is built by C36 and C40. Y42 provides a ligand contact to S-adenosyl-L-methionine. C43 provides a ligand contact to [4Fe-4S] cluster. Residue R79 coordinates GTP. G83 serves as a coordination point for S-adenosyl-L-methionine. T110 is a binding site for GTP. Residue S134 coordinates S-adenosyl-L-methionine. K171 contacts GTP. M205 contacts S-adenosyl-L-methionine. [4Fe-4S] cluster-binding residues include C268 and C271. Residue 273–275 (RLR) participates in GTP binding. A [4Fe-4S] cluster-binding site is contributed by C285.

It belongs to the radical SAM superfamily. MoaA family. As to quaternary structure, monomer and homodimer. It depends on [4Fe-4S] cluster as a cofactor.

The enzyme catalyses GTP + AH2 + S-adenosyl-L-methionine = (8S)-3',8-cyclo-7,8-dihydroguanosine 5'-triphosphate + 5'-deoxyadenosine + L-methionine + A + H(+). The protein operates within cofactor biosynthesis; molybdopterin biosynthesis. In terms of biological role, catalyzes the cyclization of GTP to (8S)-3',8-cyclo-7,8-dihydroguanosine 5'-triphosphate. This chain is GTP 3',8-cyclase, found in Actinobacillus pleuropneumoniae serotype 3 (strain JL03).